The primary structure comprises 43 residues: SPbeta prophage-derived uncharacterized protein YotD (43 aa).

This chain is SPbeta prophage-derived uncharacterized protein YotD (yotD), found in Bacillus subtilis (strain 168).